Consider the following 180-residue polypeptide: Large ribosomal subunit protein uL5 (180 aa).

The protein belongs to the universal ribosomal protein uL5 family. Part of the 50S ribosomal subunit; part of the 5S rRNA/L5/L18/L25 subcomplex. Contacts the 5S rRNA and the P site tRNA. Forms a bridge to the 30S subunit in the 70S ribosome.

This is one of the proteins that bind and probably mediate the attachment of the 5S RNA into the large ribosomal subunit, where it forms part of the central protuberance. In the 70S ribosome it contacts protein S13 of the 30S subunit (bridge B1b), connecting the 2 subunits; this bridge is implicated in subunit movement. Contacts the P site tRNA; the 5S rRNA and some of its associated proteins might help stabilize positioning of ribosome-bound tRNAs. In Synechocystis sp. (strain ATCC 27184 / PCC 6803 / Kazusa), this protein is Large ribosomal subunit protein uL5.